A 278-amino-acid chain; its full sequence is Sulfur carrier protein FdhD (278 aa).

The Cysteine persulfide intermediate role is filled by Cys-121. Residue 260-265 (FCKPGR) participates in Mo-bis(molybdopterin guanine dinucleotide) binding.

Belongs to the FdhD family.

The protein resides in the cytoplasm. Its function is as follows. Required for formate dehydrogenase (FDH) activity. Acts as a sulfur carrier protein that transfers sulfur from IscS to the molybdenum cofactor prior to its insertion into FDH. The chain is Sulfur carrier protein FdhD from Salmonella paratyphi A (strain ATCC 9150 / SARB42).